The sequence spans 77 residues: Blood-induced peptide 1 (77 aa).

Residues 38-71 adopt a coiled-coil conformation; it reads EDFLHQENSELKKSLKNLEMENEKLKNILKTDYN.

Functionally, plays an important role in survival in host blood through increasing tolerance to stresses such as heat, salt, or cycloheximide, which is essential for virulence. This Candida albicans (strain SC5314 / ATCC MYA-2876) (Yeast) protein is Blood-induced peptide 1.